The following is a 218-amino-acid chain: Peptide methionine sulfoxide reductase MsrA (218 aa).

The active site involves Cys-54.

Belongs to the MsrA Met sulfoxide reductase family.

It catalyses the reaction L-methionyl-[protein] + [thioredoxin]-disulfide + H2O = L-methionyl-(S)-S-oxide-[protein] + [thioredoxin]-dithiol. It carries out the reaction [thioredoxin]-disulfide + L-methionine + H2O = L-methionine (S)-S-oxide + [thioredoxin]-dithiol. In terms of biological role, has an important function as a repair enzyme for proteins that have been inactivated by oxidation. Catalyzes the reversible oxidation-reduction of methionine sulfoxide in proteins to methionine. This is Peptide methionine sulfoxide reductase MsrA from Azorhizobium caulinodans (strain ATCC 43989 / DSM 5975 / JCM 20966 / LMG 6465 / NBRC 14845 / NCIMB 13405 / ORS 571).